A 69-amino-acid polypeptide reads, in one-letter code: NAD(P)H-quinone oxidoreductase subunit O (69 aa).

The protein belongs to the complex I NdhO subunit family. In terms of assembly, NDH-1 can be composed of about 15 different subunits; different subcomplexes with different compositions have been identified which probably have different functions.

It localises to the cellular thylakoid membrane. It carries out the reaction a plastoquinone + NADH + (n+1) H(+)(in) = a plastoquinol + NAD(+) + n H(+)(out). The enzyme catalyses a plastoquinone + NADPH + (n+1) H(+)(in) = a plastoquinol + NADP(+) + n H(+)(out). Functionally, NDH-1 shuttles electrons from an unknown electron donor, via FMN and iron-sulfur (Fe-S) centers, to quinones in the respiratory and/or the photosynthetic chain. The immediate electron acceptor for the enzyme in this species is believed to be plastoquinone. Couples the redox reaction to proton translocation, and thus conserves the redox energy in a proton gradient. Cyanobacterial NDH-1 also plays a role in inorganic carbon-concentration. The sequence is that of NAD(P)H-quinone oxidoreductase subunit O from Acaryochloris marina (strain MBIC 11017).